Consider the following 264-residue polypeptide: 2-hydroxyhexa-2,4-dienoate hydratase (264 aa).

It belongs to the hydratase/decarboxylase family.

It carries out the reaction (2Z,4Z)-2-hydroxyhexa-2,4-dienoate + H2O = 4-hydroxy-2-oxohexanoate. In terms of biological role, involved in the catatabolism of testosterone. Catalyzes the hydration of 2-hydroxyhexa-2,4-dienoic acid to 4-hydroxy-2-oxohexanoic acid. This chain is 2-hydroxyhexa-2,4-dienoate hydratase (tesE), found in Comamonas testosteroni (Pseudomonas testosteroni).